The primary structure comprises 128 residues: Saitohin (128 aa).

Positions 77–128 (SYSSEESSRNGAEQGRQLSIEGPFQGQNCPSHPAAALPLPMRGESQATSCQV) are disordered.

As to quaternary structure, interacts with PRDX6. As to expression, highest expression in placenta, muscle, fetal brain, and adult brain, with lower expression in heart, kidney, stomach, testis, and adrenal gland. In the central nervous system, highest expression is in temporal lobe, hypothalamus, medulla and spinal cord, with lower expression in other brain regions.

It localises to the cytoplasm. The protein localises to the nucleus. This Homo sapiens (Human) protein is Saitohin (STH).